We begin with the raw amino-acid sequence, 331 residues long: 6-phosphogluconolactonase (331 aa).

The protein belongs to the cycloisomerase 2 family.

The catalysed reaction is 6-phospho-D-glucono-1,5-lactone + H2O = 6-phospho-D-gluconate + H(+). Its pathway is carbohydrate degradation; pentose phosphate pathway; D-ribulose 5-phosphate from D-glucose 6-phosphate (oxidative stage): step 2/3. Its function is as follows. Catalyzes the hydrolysis of 6-phosphogluconolactone to 6-phosphogluconate. This is 6-phosphogluconolactonase from Salmonella gallinarum (strain 287/91 / NCTC 13346).